A 516-amino-acid polypeptide reads, in one-letter code: Histone H4 transcription factor (516 aa).

3 consecutive C2H2-type zinc fingers follow at residues 15-39 (LQCE…VTQH), 127-151 (FLCL…VEAH), and 167-191 (VLCG…LRSH). A C2H2-type 4; degenerate zinc finger spans residues 197–219 (VACPTCGGMFANNTKFLDHIRRQ). 5 consecutive C2H2-type zinc fingers follow at residues 227-249 (FQCS…MRNH), 253-276 (YKCP…RFRH), 282-304 (FKCD…LDTH), 310-335 (YSCD…RKVH), and 343-366 (YRCH…RKKH). Residues 371 to 516 (PSGHPRFRYK…AAEEPEVQMV (146 aa)) are interaction with NPAT. The required for activation of histone H4 transcription and contributes to DNA-binding stretch occupies residues 372–405 (SGHPRFRYKEHEDGYMRLQLVRYESVELTQQLLR). Disordered stretches follow at residues 429 to 456 (TVPG…PASQ) and 486 to 516 (PGEP…VQMV). Positions 436–445 (PQEEAEEEGG) are enriched in acidic residues.

In terms of assembly, binds MBD2 and a histone deacetylase complex. Interacts with NPAT. Ubiquitinated. Ubiquitination may lead to proteasome-mediated degradation.

The protein localises to the nucleus. In terms of biological role, transcriptional repressor that binds to the consensus sequence 5'-CGGACGTT-3' and to the RB1 promoter. Transcriptional activator that promotes histone H4 gene transcription at the G1/S phase transition in conjunction with NPAT. Also activates transcription of the ATM and PRKDC genes. Autoregulates its expression by associating with its own promoter. This Bos taurus (Bovine) protein is Histone H4 transcription factor (HINFP).